The sequence spans 609 residues: Glutamine--fructose-6-phosphate aminotransferase [isomerizing] (609 aa).

The active-site Nucleophile; for GATase activity is Cys-2. The 216-residue stretch at 2 to 217 (CGIVGAIAGR…EGDTAELRRD (216 aa)) folds into the Glutamine amidotransferase type-2 domain. 2 consecutive SIS domains span residues 284–425 (TADA…LQGR) and 458–599 (WAER…VDKP). Lys-604 acts as the For Fru-6P isomerization activity in catalysis.

Homodimer.

It is found in the cytoplasm. The catalysed reaction is D-fructose 6-phosphate + L-glutamine = D-glucosamine 6-phosphate + L-glutamate. Its function is as follows. Catalyzes the first step in hexosamine metabolism, converting fructose-6P into glucosamine-6P using glutamine as a nitrogen source. The polypeptide is Glutamine--fructose-6-phosphate aminotransferase [isomerizing] (Xanthomonas campestris pv. campestris (strain ATCC 33913 / DSM 3586 / NCPPB 528 / LMG 568 / P 25)).